Here is a 598-residue protein sequence, read N- to C-terminus: Elongation factor 4 (598 aa).

The 183-residue stretch at 2–184 (NRIRNFSIIA…TIVAKLPPPK (183 aa)) folds into the tr-type G domain. GTP contacts are provided by residues 14–19 (DHGKST) and 131–134 (NKID).

It belongs to the TRAFAC class translation factor GTPase superfamily. Classic translation factor GTPase family. LepA subfamily.

The protein resides in the cell inner membrane. It catalyses the reaction GTP + H2O = GDP + phosphate + H(+). Functionally, required for accurate and efficient protein synthesis under certain stress conditions. May act as a fidelity factor of the translation reaction, by catalyzing a one-codon backward translocation of tRNAs on improperly translocated ribosomes. Back-translocation proceeds from a post-translocation (POST) complex to a pre-translocation (PRE) complex, thus giving elongation factor G a second chance to translocate the tRNAs correctly. Binds to ribosomes in a GTP-dependent manner. This Desulfosudis oleivorans (strain DSM 6200 / JCM 39069 / Hxd3) (Desulfococcus oleovorans) protein is Elongation factor 4.